The primary structure comprises 279 residues: Urease accessory protein UreD (279 aa).

This sequence belongs to the UreD family. UreD, UreF and UreG form a complex that acts as a GTP-hydrolysis-dependent molecular chaperone, activating the urease apoprotein by helping to assemble the nickel containing metallocenter of UreC. The UreE protein probably delivers the nickel.

Its subcellular location is the cytoplasm. Its function is as follows. Required for maturation of urease via the functional incorporation of the urease nickel metallocenter. The sequence is that of Urease accessory protein UreD from Nostoc punctiforme (strain ATCC 29133 / PCC 73102).